The following is a 290-amino-acid chain: 4-hydroxy-tetrahydrodipicolinate synthase (290 aa).

Threonine 48 provides a ligand contact to pyruvate. Tyrosine 137 serves as the catalytic Proton donor/acceptor. The active-site Schiff-base intermediate with substrate is lysine 165. A pyruvate-binding site is contributed by isoleucine 206.

Belongs to the DapA family. In terms of assembly, homotetramer; dimer of dimers.

The protein localises to the cytoplasm. It catalyses the reaction L-aspartate 4-semialdehyde + pyruvate = (2S,4S)-4-hydroxy-2,3,4,5-tetrahydrodipicolinate + H2O + H(+). Its pathway is amino-acid biosynthesis; L-lysine biosynthesis via DAP pathway; (S)-tetrahydrodipicolinate from L-aspartate: step 3/4. Functionally, catalyzes the condensation of (S)-aspartate-beta-semialdehyde [(S)-ASA] and pyruvate to 4-hydroxy-tetrahydrodipicolinate (HTPA). This chain is 4-hydroxy-tetrahydrodipicolinate synthase, found in Enterococcus faecalis (strain ATCC 700802 / V583).